A 239-amino-acid polypeptide reads, in one-letter code: Serine protease SplF (239 aa).

The N-terminal stretch at 1 to 36 (MNKNIIIKSIAALTILTSITGVGTTVVDGIQQTAKA) is a signal peptide. Catalysis depends on charge relay system residues His-75, Asp-114, and Ser-192.

This sequence belongs to the peptidase S1B family.

It is found in the secreted. In Staphylococcus aureus (strain MSSA476), this protein is Serine protease SplF (splF).